We begin with the raw amino-acid sequence, 154 residues long: Superoxide dismutase [Cu-Zn] (154 aa).

Residues histidine 47, histidine 49, and histidine 64 each contribute to the Cu cation site. Residues cysteine 58 and cysteine 147 are joined by a disulfide bond. Residues histidine 64, histidine 72, histidine 81, and aspartate 84 each contribute to the Zn(2+) site. Residue histidine 121 participates in Cu cation binding. Residue arginine 144 participates in substrate binding.

Belongs to the Cu-Zn superoxide dismutase family. As to quaternary structure, homodimer. Cu cation serves as cofactor. It depends on Zn(2+) as a cofactor.

The protein resides in the cytoplasm. It catalyses the reaction 2 superoxide + 2 H(+) = H2O2 + O2. Its function is as follows. Destroys radicals which are normally produced within the cells and which are toxic to biological systems. This is Superoxide dismutase [Cu-Zn] (sod1) from Schizosaccharomyces pombe (strain 972 / ATCC 24843) (Fission yeast).